A 66-amino-acid chain; its full sequence is Prophage transcriptional regulatory protein (66 aa).

This Escherichia coli (strain K12) protein is Prophage transcriptional regulatory protein (croE).